The sequence spans 337 residues: tRNA-cytidine(32) 2-sulfurtransferase (337 aa).

A PP-loop motif motif is present at residues 71-76 (SGGKDS). Positions 146, 149, and 237 each coordinate [4Fe-4S] cluster.

This sequence belongs to the TtcA family. Homodimer. Mg(2+) is required as a cofactor. The cofactor is [4Fe-4S] cluster.

The protein resides in the cytoplasm. The enzyme catalyses cytidine(32) in tRNA + S-sulfanyl-L-cysteinyl-[cysteine desulfurase] + AH2 + ATP = 2-thiocytidine(32) in tRNA + L-cysteinyl-[cysteine desulfurase] + A + AMP + diphosphate + H(+). It participates in tRNA modification. Functionally, catalyzes the ATP-dependent 2-thiolation of cytidine in position 32 of tRNA, to form 2-thiocytidine (s(2)C32). The sulfur atoms are provided by the cysteine/cysteine desulfurase (IscS) system. This chain is tRNA-cytidine(32) 2-sulfurtransferase, found in Burkholderia vietnamiensis (strain G4 / LMG 22486) (Burkholderia cepacia (strain R1808)).